Consider the following 329-residue polypeptide: Flotillin-like protein FloA (329 aa).

A helical membrane pass occupies residues 4–24 (IWGFLILILVLIFLGVFFSFV).

It belongs to the flotillin-like FloA family. As to quaternary structure, homooligomerizes.

It localises to the cell membrane. The protein resides in the membrane raft. Functionally, found in functional membrane microdomains (FMM) that may be equivalent to eukaryotic membrane rafts. FMMs are highly dynamic and increase in number as cells age. Flotillins are thought to be important factors in membrane fluidity. In Dictyoglomus turgidum (strain DSM 6724 / Z-1310), this protein is Flotillin-like protein FloA.